Here is a 93-residue protein sequence, read N- to C-terminus: Large ribosomal subunit protein bL31 (93 aa).

Residues 68–93 are disordered; it reads GSADAAADEKKTDAKNNNKDNTSKED. Basic and acidic residues predominate over residues 74 to 93; that stretch reads ADEKKTDAKNNNKDNTSKED.

Belongs to the bacterial ribosomal protein bL31 family. Type A subfamily. Part of the 50S ribosomal subunit.

Its function is as follows. Binds the 23S rRNA. The sequence is that of Large ribosomal subunit protein bL31 from Prochlorococcus marinus (strain MIT 9303).